Consider the following 168-residue polypeptide: Protein-export protein SecB (168 aa).

The protein belongs to the SecB family. In terms of assembly, homotetramer, a dimer of dimers. One homotetramer interacts with 1 SecA dimer.

The protein resides in the cytoplasm. In terms of biological role, one of the proteins required for the normal export of preproteins out of the cell cytoplasm. It is a molecular chaperone that binds to a subset of precursor proteins, maintaining them in a translocation-competent state. It also specifically binds to its receptor SecA. This chain is Protein-export protein SecB, found in Haemophilus influenzae (strain PittGG).